The chain runs to 632 residues: ATP-dependent RNA helicase mrh4, mitochondrial (632 aa).

The N-terminal 37 residues, 1–37 (MNRLGRMSLPLRSPACLICQTRTTTLIPSSWQTARSM), are a transit peptide targeting the mitochondrion. The disordered stretch occupies residues 49-111 (MALSPDVAKP…KEEAQKKESP (63 aa)). Basic and acidic residues predominate over residues 97–111 (RSGDSKEEAQKKESP). Positions 141–174 (TSFDQFPLLPVVRNSIVSQALPGLMEVTPTPIQR) match the Q motif motif. The region spanning 194–406 (DDDEPHYDQF…RKRYPDIKRL (213 aa)) is the Helicase ATP-binding domain. 207-214 (AETGSGKT) is a binding site for ATP. The short motif at 353–356 (DEAD) is the DEAD box element. The 173-residue stretch at 460–632 (FLEPKTKKIL…EGMFRGQALI (173 aa)) folds into the Helicase C-terminal domain.

This sequence belongs to the DEAD box helicase family. MRH4 subfamily.

The protein resides in the mitochondrion. The enzyme catalyses ATP + H2O = ADP + phosphate + H(+). Its function is as follows. ATP-binding RNA helicase involved in mitochondrial RNA metabolism. Required for maintenance of mitochondrial DNA. This Aspergillus clavatus (strain ATCC 1007 / CBS 513.65 / DSM 816 / NCTC 3887 / NRRL 1 / QM 1276 / 107) protein is ATP-dependent RNA helicase mrh4, mitochondrial (mrh4).